Reading from the N-terminus, the 205-residue chain is Homeobox protein goosecoid-2 (205 aa).

Disordered stretches follow at residues 33–58 and 185–205; these read SLPA…EPGA and KRAS…KGSC. The segment at residues 126–185 is a DNA-binding region (homeobox); the sequence is TRRHRTIFSEEQLQALEALFVQNQYPDVSTRERLAGRIRLREERVEVWFKNRRAKWRHQK.

It belongs to the paired homeobox family. Bicoid subfamily. Detected in adult testis and pituitary, and in 9-10 week fetal tissue (thorax). Probably expressed in other tissues at low levels.

The protein resides in the nucleus. Its function is as follows. May have a role in development. May regulate its own transcription. May bind the bicoid consensus sequence TAATCC. The sequence is that of Homeobox protein goosecoid-2 (GSC2) from Homo sapiens (Human).